The primary structure comprises 315 residues: Homocysteine S-methyltransferase YbgG (315 aa).

The Hcy-binding domain maps to 2 to 309 (NPIQHILDTY…ENIQEIAAWA (308 aa)). Zn(2+) is bound by residues C229, C294, and C295.

The cofactor is Zn(2+).

The catalysed reaction is S-methyl-L-methionine + L-homocysteine = 2 L-methionine + H(+). This is Homocysteine S-methyltransferase YbgG (ybgG) from Bacillus subtilis (strain 168).